The following is a 433-amino-acid chain: GTPase Obg (433 aa).

An Obg domain is found at 1-159 (MAITDYCECR…LNVSLEVKYL (159 aa)). Residues 160-329 (ANVGIVGFPN…LLDRVFELYN (170 aa)) enclose the OBG-type G domain. GTP is bound by residues 166-173 (GFPNSGKS), 191-195 (FTTLI), 212-215 (DIPG), 282-285 (NKID), and 310-312 (ISA). 2 residues coordinate Mg(2+): serine 173 and threonine 193. The OCT domain maps to 355–433 (TNENNNDPLN…FDGCEFVIND (79 aa)).

This sequence belongs to the TRAFAC class OBG-HflX-like GTPase superfamily. OBG GTPase family. Monomer. Mg(2+) serves as cofactor.

It localises to the cytoplasm. An essential GTPase which binds GTP, GDP and possibly (p)ppGpp with moderate affinity, with high nucleotide exchange rates and a fairly low GTP hydrolysis rate. Plays a role in control of the cell cycle, stress response, ribosome biogenesis and in those bacteria that undergo differentiation, in morphogenesis control. This is GTPase Obg from Mycoplasma genitalium (strain ATCC 33530 / DSM 19775 / NCTC 10195 / G37) (Mycoplasmoides genitalium).